We begin with the raw amino-acid sequence, 427 residues long: Riboflavin transporter rft-1 (427 aa).

Topologically, residues 1–2 are cytoplasmic; the sequence is MK. A helical transmembrane segment spans residues 3–23; it reads TFLFTFCLVAIFGSSSWIGTN. Topologically, residues 24 to 42 are extracellular; it reads SVWMELSLLTAKLPEGWNL. Residues 43 to 63 traverse the membrane as a helical segment; sequence PSYLSAIVQIACLGPLIYSII. Residues 64–73 are Cytoplasmic-facing; it reads HKGIKMTIPT. A helical transmembrane segment spans residues 74–94; that stretch reads VPLIFIFMVLACICQLGLCFF. Topologically, residues 95-111 are extracellular; sequence WDDTGYIFGAIRSWPLY. A helical membrane pass occupies residues 112–132; the sequence is LLLFGLAIVDAISSVLFLPFM. Residues 133–139 lie on the Cytoplasmic side of the membrane; sequence AQFHPSF. The chain crosses the membrane as a helical span at residues 140 to 160; the sequence is LNAYFVGMGLSALIPSLLSLI. Residues 161–184 are Extracellular-facing; sequence QGTSNYWCDDNKTPHYYPPRFSVS. A helical transmembrane segment spans residues 185-205; the sequence is MFFLINFFFTCAAVAAFLVLY. Topologically, residues 206–261 are cytoplasmic; that stretch reads KIGAHKNSSQVEPEPKHSIQIIQGDSTTDVNEVNTESSFQETSSIPDSSSATGARL. Residues 262-282 traverse the membrane as a helical segment; it reads AFLLLTTALVNAQMNGIVTSV. At 283-297 the chain is on the extracellular side; sequence QSYATLVYSQNTYHY. A helical membrane pass occupies residues 298 to 318; sequence AVTLSNVISPLASYLQFFVKI. At 319–322 the chain is on the cytoplasmic side; that stretch reads RSLP. Residues 323–343 form a helical membrane-spanning segment; that stretch reads ILAFLTLCSSLTTAVIIYLAA. The Extracellular segment spans residues 344–353; it reads LSPNWIFNSE. A helical transmembrane segment spans residues 354–374; it reads TAGTIISIASSLIAAGLHSYL. Topologically, residues 375–391 are cytoplasmic; it reads RVMFAALLREGNQKESR. Residues 392-412 traverse the membrane as a helical segment; the sequence is LFWCGAFIQIGSFTGSAIMFP. The Extracellular segment spans residues 413–427; that stretch reads LVNVWKLFHSAPSCR.

Belongs to the riboflavin transporter family. In terms of tissue distribution, expressed in intestine.

The protein localises to the cell membrane. It carries out the reaction riboflavin(in) = riboflavin(out). With respect to regulation, activity is strongly inhibited by riboflavin analogs, such as lumiflavin and lumichrome. Functionally, riboflavin transporter. Riboflavin transport is Na(+)-independent but pH-sensitive. The sequence is that of Riboflavin transporter rft-1 from Caenorhabditis elegans.